A 161-amino-acid chain; its full sequence is CASP-like protein 1C2 (161 aa).

Topologically, residues 1 to 7 (MAKNTDR) are cytoplasmic. Residues 8 to 28 (ICFLVLRLLAFGATLSAAIVM) form a helical membrane-spanning segment. The Extracellular portion of the chain corresponds to 29–53 (ATSHERTTYLSLSIEAKYSHTPAFK). A helical transmembrane segment spans residues 54–74 (YFVIANAIGSAYSLLLLFLPS). Topologically, residues 75–86 (HGSLWPLVIASD) are cytoplasmic. A helical membrane pass occupies residues 87–107 (VVITMFLTSSISAALSIAYVG). The Extracellular segment spans residues 108 to 131 (KKGNSYAGWLPICDQVPNYCNHVT). A helical membrane pass occupies residues 132-152 (GALAAGFIGVVLYMVLLQYSI). Residues 153-161 (YTKCCKSSS) lie on the Cytoplasmic side of the membrane.

The protein belongs to the Casparian strip membrane proteins (CASP) family. As to quaternary structure, homodimer and heterodimers.

It localises to the cell membrane. In Vitis vinifera (Grape), this protein is CASP-like protein 1C2.